The primary structure comprises 312 residues: DNA-directed RNA polymerase subunit alpha (312 aa).

The segment at 1 to 226 (MIEFEKPNIT…EHLDIFVNLT (226 aa)) is alpha N-terminal domain (alpha-NTD). Residues 243-312 (KEKMLEMTIE…DLGLGLRKED (70 aa)) form an alpha C-terminal domain (alpha-CTD) region.

It belongs to the RNA polymerase alpha chain family. Homodimer. The RNAP catalytic core consists of 2 alpha, 1 beta, 1 beta' and 1 omega subunit. When a sigma factor is associated with the core the holoenzyme is formed, which can initiate transcription.

The enzyme catalyses RNA(n) + a ribonucleoside 5'-triphosphate = RNA(n+1) + diphosphate. Its function is as follows. DNA-dependent RNA polymerase catalyzes the transcription of DNA into RNA using the four ribonucleoside triphosphates as substrates. The sequence is that of DNA-directed RNA polymerase subunit alpha from Lacticaseibacillus casei (strain BL23) (Lactobacillus casei).